Consider the following 435-residue polypeptide: Glutamate-1-semialdehyde 2,1-aminomutase (435 aa).

Residue lysine 266 is modified to N6-(pyridoxal phosphate)lysine.

It belongs to the class-III pyridoxal-phosphate-dependent aminotransferase family. HemL subfamily. Homodimer. Pyridoxal 5'-phosphate is required as a cofactor.

Its subcellular location is the cytoplasm. It carries out the reaction (S)-4-amino-5-oxopentanoate = 5-aminolevulinate. Its pathway is porphyrin-containing compound metabolism; protoporphyrin-IX biosynthesis; 5-aminolevulinate from L-glutamyl-tRNA(Glu): step 2/2. This chain is Glutamate-1-semialdehyde 2,1-aminomutase, found in Helicobacter hepaticus (strain ATCC 51449 / 3B1).